Reading from the N-terminus, the 364-residue chain is Geissoschizine synthase (364 aa).

An Enoyl reductase (ER) domain is found at 24–343; it reads GILHPIKFSR…DYLSTAMERI (320 aa). Cys51 is a Zn(2+) binding site. Asn52 contributes to the NADP(+) binding site. Residues His73, Glu74, Cys104, Cys107, Cys110, Cys118, and Cys168 each coordinate Zn(2+). Leu194, Gly196, Leu197, Ser216, Thr217, Ser218, Lys221, Arg261, Val280, Ala282, Ser304, Thr306, and Arg351 together coordinate NADP(+).

Belongs to the zinc-containing alcohol dehydrogenase family. Class-III subfamily. In terms of assembly, homodimer. Zn(2+) is required as a cofactor.

The catalysed reaction is (19E)-geissoschizine + NADP(+) = 4,21-dehydrogeissoschizine + NADPH. It catalyses the reaction (19E)-geissoschizine + NADPH + H(+) = (16R,19E)-isositsirikine + NADP(+). The enzyme catalyses (19E)-geissoschizine + NADPH + H(+) = (16R,19Z)-isositsirikine + NADP(+). The protein operates within alkaloid biosynthesis. An alcohol dehydrogenase involved in the biosynthesis of seco-iridoid and derivatives monoterpenoid indole alkaloids natural products. Catalyzes the production of geissoschizine and its conversion to (16R)-E-isositsirikine and (16R)-Z-isositsirikine. This chain is Geissoschizine synthase, found in Alstonia scholaris (Dogbane).